The primary structure comprises 275 residues: Trypsin-3 (275 aa).

The N-terminal stretch at 1 to 22 (MISNKIAILLAVLVVAVACAQA) is a signal peptide. A propeptide spans 23–48 (RVALKHRSVQALPRFLPRPKYDVGHR) (activation peptide). Residues 49–274 (IVGGFEIDVS…VRDWVRENSG (226 aa)) form the Peptidase S1 domain. An intrachain disulfide couples cysteine 74 to cysteine 90. Residues histidine 89 and aspartate 134 each act as charge relay system in the active site. Cystine bridges form between cysteine 199/cysteine 215 and cysteine 226/cysteine 250. The active-site Charge relay system is the serine 230.

Belongs to the peptidase S1 family. As to expression, expressed in the midgut. Expression levels drop a few hours after blood feeding and pick up again 28 hours later.

It is found in the secreted. It catalyses the reaction Preferential cleavage: Arg-|-Xaa, Lys-|-Xaa.. Constitutive trypsin that is expressed 2 days after emergence, coinciding with host seeking behavior of the female. The polypeptide is Trypsin-3 (TRYP3) (Anopheles gambiae (African malaria mosquito)).